Here is a 303-residue protein sequence, read N- to C-terminus: Cathepsin B-like CP1 (303 aa).

An N-terminal signal peptide occupies residues Met1 to Ala19. The N-linked (GlcNAc...) asparagine glycan is linked to Asn41. Cystine bridges form between Cys92–Cys119, Cys102–Cys145, and Cys138–Cys181. Cys105 is an active-site residue. Catalysis depends on residues His249 and Asn270.

The protein belongs to the peptidase C1 family.

It localises to the vacuole. Its function is as follows. Thiol protease which is required for parasite excystation and invasion of the proximal small intestine of the human host. This is Cathepsin B-like CP1 (CP1) from Giardia intestinalis (Giardia lamblia).